The primary structure comprises 37 residues: Cytochrome b6-f complex subunit 7 (37 aa).

Residues Ala-11–Leu-29 traverse the membrane as a helical segment.

Belongs to the PetM family. The 4 large subunits of the cytochrome b6-f complex are cytochrome b6, subunit IV (17 kDa polypeptide, PetD), cytochrome f and the Rieske protein, while the 4 small subunits are PetG, PetL, PetM and PetN. The complex functions as a dimer.

The protein localises to the cellular thylakoid membrane. In terms of biological role, component of the cytochrome b6-f complex, which mediates electron transfer between photosystem II (PSII) and photosystem I (PSI), cyclic electron flow around PSI, and state transitions. The polypeptide is Cytochrome b6-f complex subunit 7 (Rippkaea orientalis (strain PCC 8801 / RF-1) (Cyanothece sp. (strain PCC 8801))).